We begin with the raw amino-acid sequence, 509 residues long: Maturase K (509 aa).

The protein belongs to the intron maturase 2 family. MatK subfamily.

The protein localises to the plastid. It localises to the chloroplast. Its function is as follows. Usually encoded in the trnK tRNA gene intron. Probably assists in splicing its own and other chloroplast group II introns. This is Maturase K from Nicotiana clevelandii (Wild tobacco).